The sequence spans 644 residues: 3D-(3,5/4)-trihydroxycyclohexane-1,2-dione hydrolase (644 aa).

Glutamate 65 lines the thiamine diphosphate pocket. The thiamine pyrophosphate binding stretch occupies residues 442–522 (SLPGDLQRMW…INVLLFDNSG (81 aa)). 2 residues coordinate Mg(2+): aspartate 493 and asparagine 520.

It belongs to the TPP enzyme family. Mg(2+) serves as cofactor. It depends on thiamine diphosphate as a cofactor.

It carries out the reaction 3D-3,5/4-trihydroxycyclohexane-1,2-dione + H2O = 5-deoxy-D-glucuronate + H(+). The protein operates within polyol metabolism; myo-inositol degradation into acetyl-CoA; acetyl-CoA from myo-inositol: step 3/7. Functionally, involved in the cleavage of the C1-C2 bond of 3D-(3,5/4)-trihydroxycyclohexane-1,2-dione (THcHDO) to yield 5-deoxy-glucuronate (5DG). The chain is 3D-(3,5/4)-trihydroxycyclohexane-1,2-dione hydrolase from Bacillus thuringiensis (strain Al Hakam).